Reading from the N-terminus, the 189-residue chain is Probable chorismate pyruvate-lyase (189 aa).

Arginine 77, leucine 115, and glutamate 174 together coordinate substrate.

Belongs to the UbiC family.

The protein localises to the cytoplasm. It carries out the reaction chorismate = 4-hydroxybenzoate + pyruvate. The protein operates within cofactor biosynthesis; ubiquinone biosynthesis. In terms of biological role, removes the pyruvyl group from chorismate, with concomitant aromatization of the ring, to provide 4-hydroxybenzoate (4HB) for the ubiquinone pathway. This chain is Probable chorismate pyruvate-lyase, found in Shewanella sp. (strain MR-7).